The primary structure comprises 255 residues: BTB/POZ domain-containing protein kctd15 (255 aa).

In terms of domain architecture, BTB spans alanine 30–glutamate 100.

As to quaternary structure, forms oligomers, predominantly homopentamers. Interacts with TFAP2A; this interaction inhibits TFAP2A transcriptional activation.

It is found in the nucleus. During embryonic development, interferes with neural crest formation. Inhibits AP2 transcriptional activity by interaction with its activation domain. The polypeptide is BTB/POZ domain-containing protein kctd15 (kctd15) (Xenopus tropicalis (Western clawed frog)).